The following is a 347-amino-acid chain: 3-methyl-2-oxobutanoate hydroxymethyltransferase 1, mitochondrial (347 aa).

Residues 1 to 48 (MASSLTRNCSRFSKAISVRFMSNLPENTVYGGPKPQNPNQRVTLTHLR) constitute a mitochondrion transit peptide. Positions 83 and 122 each coordinate Mg(2+). 3-methyl-2-oxobutanoate contacts are provided by residues 83–84 (DS), Asp-122, and Lys-152. Glu-154 contacts Mg(2+). Glu-222 acts as the Proton acceptor in catalysis.

The protein belongs to the PanB family. Requires Mg(2+) as cofactor.

The protein localises to the mitochondrion. The catalysed reaction is 3-methyl-2-oxobutanoate + (6R)-5,10-methylene-5,6,7,8-tetrahydrofolate + H2O = 2-dehydropantoate + (6S)-5,6,7,8-tetrahydrofolate. Its pathway is cofactor biosynthesis; (R)-pantothenate biosynthesis; (R)-pantoate from 3-methyl-2-oxobutanoate: step 1/2. In terms of biological role, catalyzes the reversible reaction in which hydroxymethyl group from 5,10-methylenetetrahydrofolate is transferred onto alpha-ketoisovalerate to form ketopantoate. This chain is 3-methyl-2-oxobutanoate hydroxymethyltransferase 1, mitochondrial (KPHMT1), found in Arabidopsis thaliana (Mouse-ear cress).